The primary structure comprises 1091 residues: Protein CTR9 homolog (1091 aa).

Residue alanine 2 is modified to N-acetylalanine. TPR repeat units follow at residues 90–127, 128–161, 163–195, 197–230, 232–267, 305–338, 343–376, 377–410, 412–443, 449–482, 558–591, 593–625, 640–673, 674–707, 713–746, and 749–782; these read GAYY…DMHE, PSTW…APDN, PALL…FPGC, AAVR…DPDN, EALV…YPYC, SHSF…TNNN, VFPY…YPDN, CETL…DPRD, QAFV…MKKG, IEVL…GIWI, IDAY…DDKN, NALS…TDGK, AAMR…HNSN, MYAA…ASGS, PDVW…FFYN, and SQIL…TPSN. The tract at residues 919–1091 is disordered; sequence FQRIKEQWKS…EEEEEEEEAN (173 aa). A compositionally biased stretch (basic residues) spans 951 to 965; that stretch reads ERRRKKGGKRRKKDK. Acidic residues-rich tracts occupy residues 974 to 993, 1003 to 1016, 1026 to 1035, and 1080 to 1091; these read DDEE…DEDA, MTTQ…DDDA, EDPDVDDDEV, and NMEEEEEEEEAN.

Component of the nuclear PAF1 complex (PAF1C), which consists of VIP2/ELF7/PAF1, VIP3/SKI8/WDR61, VIP4/LEO1, VIP5/RTF1, VIP6/ELF8/CTR9 and CDC73. Interacts with VIP3 and VIP4. In terms of tissue distribution, expressed in roots, leaves and shoot apex.

It is found in the nucleus. Functionally, component of the PAF1 complex (PAF1C) which is involved in histone modifications such as methylation on histone H3 'Lys-4' (H3K4me3). Involved in regulation of flowering time. Required for the expression of the MADS box genes and flowering repressors FLC, AGL27/FLM and AGL31/MAF2. Required for histone H3 trimethylation on 'Lys-4' H3K4me3 at the FLC and AGL27/FLM loci. Involved in the control of seed dormancy and germination. This chain is Protein CTR9 homolog, found in Arabidopsis thaliana (Mouse-ear cress).